The chain runs to 912 residues: Metabotropic glutamate receptor 4 (912 aa).

Positions 1 to 32 are cleaved as a signal peptide; it reads MPGKSGLGWWWARLPLCLLLSLYGPWMPSSLG. Residues 33-586 lie on the Extracellular side of the membrane; sequence KPKGHPHMNS…PIIKLEWDSP (554 aa). Cysteines 67 and 109 form a disulfide. Asparagine 98 carries an N-linked (GlcNAc...) asparagine glycan. L-glutamate is bound by residues serine 159, 180-182, and tyrosine 230; that span reads AST. 7 cysteine pairs are disulfide-bonded: cysteine 249-cysteine 538, cysteine 372-cysteine 388, cysteine 428-cysteine 435, cysteine 520-cysteine 539, cysteine 524-cysteine 542, cysteine 545-cysteine 557, and cysteine 560-cysteine 573. A glycan (N-linked (GlcNAc...) asparagine) is linked at asparagine 301. Aspartate 312 lines the L-glutamate pocket. Lysine 405 contacts L-glutamate. 2 N-linked (GlcNAc...) asparagine glycosylation sites follow: asparagine 454 and asparagine 484. The N-linked (GlcNAc...) asparagine glycan is linked to asparagine 569. A helical transmembrane segment spans residues 587-607; that stretch reads WAVLPLFLAVVGIAATLFVVI. Topologically, residues 608–624 are cytoplasmic; the sequence is TFVRYNDTPIVKASGRE. Residues 625-645 form a helical membrane-spanning segment; the sequence is LSYVLLAGIFLCYATTFLMIA. At 646–653 the chain is on the extracellular side; the sequence is EPDLGTCS. Residues 654 to 671 form a helical membrane-spanning segment; that stretch reads LRRIFLGLGMSISYAALL. The Cytoplasmic portion of the chain corresponds to 672–699; sequence TKTNRIYRIFEQGKRSVSAPRFISPASQ. Residues 700–720 traverse the membrane as a helical segment; it reads LAITFSLISLQLLGICVWFVV. Topologically, residues 721-751 are extracellular; sequence DPSHSVVDFQDQRTLDPRFARGVLKCDISDL. A helical membrane pass occupies residues 752–772; it reads SLICLLGYSMLLMVTCTVYAI. Over 773–786 the chain is Cytoplasmic; it reads KTRGVPETFNEAKP. A helical membrane pass occupies residues 787-807; the sequence is IGFTMYTTCIVWLAFIPIFFG. Over 808-826 the chain is Extracellular; the sequence is TSQSADKLYIQTTTLTVSV. A helical membrane pass occupies residues 827 to 847; the sequence is SLSASVSLGMLYMPKVYIILF. At 848 to 912 the chain is on the cytoplasmic side; that stretch reads HPEQNVPKRK…TYVTYTNHAI (65 aa).

The protein belongs to the G-protein coupled receptor 3 family. As to quaternary structure, interacts with PICK1.

Its subcellular location is the cell membrane. In terms of biological role, G-protein coupled receptor for glutamate. Ligand binding causes a conformation change that triggers signaling via guanine nucleotide-binding proteins (G proteins) and modulates the activity of down-stream effectors. Signaling inhibits adenylate cyclase activity. The protein is Metabotropic glutamate receptor 4 (GRM4) of Macaca fascicularis (Crab-eating macaque).